The following is a 443-amino-acid chain: DNA double-strand break repair protein Mre11 (443 aa).

4 residues coordinate Mn(2+): Asp-8, His-10, Asp-49, and Asn-84. The Proton donor role is filled by His-85. Mn(2+)-binding residues include His-169, His-201, and His-203. Positions 382–429 (QEEGAEERVVEEETEKKVEEQFKGDEEADEAERRAEETEKAKSTKKAR) are disordered. A compositionally biased stretch (basic and acidic residues) spans 395–423 (TEKKVEEQFKGDEEADEAERRAEETEKAK).

It belongs to the MRE11/RAD32 family. As to quaternary structure, homodimer. Forms a heterotetramer composed of two Mre11 subunits and two Rad50 subunits. Mn(2+) is required as a cofactor.

With respect to regulation, nuclease activity is regulated by Rad50. Functionally, part of the Rad50/Mre11 complex, which is involved in the early steps of DNA double-strand break (DSB) repair. The complex may facilitate opening of the processed DNA ends to aid in the recruitment of HerA and NurA. Mre11 binds to DSB ends and has both double-stranded 3'-5' exonuclease activity and single-stranded endonuclease activity. This chain is DNA double-strand break repair protein Mre11, found in Archaeoglobus fulgidus (strain ATCC 49558 / DSM 4304 / JCM 9628 / NBRC 100126 / VC-16).